The chain runs to 95 residues: Co-chaperonin GroES (95 aa).

The protein belongs to the GroES chaperonin family. Heptamer of 7 subunits arranged in a ring. Interacts with the chaperonin GroEL.

Its subcellular location is the cytoplasm. In terms of biological role, together with the chaperonin GroEL, plays an essential role in assisting protein folding. The GroEL-GroES system forms a nano-cage that allows encapsulation of the non-native substrate proteins and provides a physical environment optimized to promote and accelerate protein folding. GroES binds to the apical surface of the GroEL ring, thereby capping the opening of the GroEL channel. The chain is Co-chaperonin GroES from Methylocella silvestris (strain DSM 15510 / CIP 108128 / LMG 27833 / NCIMB 13906 / BL2).